The sequence spans 31 residues: Cytochrome b6-f complex subunit 6 (31 aa).

Residues 4–24 (ITSYFGFLLVVLTITSALFIG) traverse the membrane as a helical segment.

Belongs to the PetL family. As to quaternary structure, the 4 large subunits of the cytochrome b6-f complex are cytochrome b6, subunit IV (17 kDa polypeptide, PetD), cytochrome f and the Rieske protein, while the 4 small subunits are PetG, PetL, PetM and PetN. The complex functions as a dimer.

It localises to the plastid. The protein localises to the chloroplast thylakoid membrane. Component of the cytochrome b6-f complex, which mediates electron transfer between photosystem II (PSII) and photosystem I (PSI), cyclic electron flow around PSI, and state transitions. PetL is important for photoautotrophic growth as well as for electron transfer efficiency and stability of the cytochrome b6-f complex. In Jasminum nudiflorum (Winter jasmine), this protein is Cytochrome b6-f complex subunit 6.